The sequence spans 172 residues: MRRWHTVSKNRQLKEAKVAEIKEKMEKAECIVLADYQGLTVEEATELRKKMREEGVEYKVFKNTLSILAAKELGYEGITDLFQGPISIAFGYEDPTAPARILNDFAKDHKKLELKGGMVQGEVYDEDKIKALAAIPPRDVLIAKLLGSFKAPVSNFAYLINAIKEKKESEEA.

It belongs to the universal ribosomal protein uL10 family. In terms of assembly, part of the ribosomal stalk of the 50S ribosomal subunit. The N-terminus interacts with L11 and the large rRNA to form the base of the stalk. The C-terminus forms an elongated spine to which L12 dimers bind in a sequential fashion forming a multimeric L10(L12)X complex.

In terms of biological role, forms part of the ribosomal stalk, playing a central role in the interaction of the ribosome with GTP-bound translation factors. This is Large ribosomal subunit protein uL10 from Clostridium tetani (strain Massachusetts / E88).